A 214-amino-acid polypeptide reads, in one-letter code: Ceramide-1-phosphate transfer protein (214 aa).

Residues D56, K60, R106, R110, and H150 each contribute to the an N-acylsphingoid base 1-phosphate site.

It belongs to the GLTP family.

It localises to the cytoplasm. It is found in the cytosol. The protein localises to the golgi apparatus. Its subcellular location is the trans-Golgi network membrane. The protein resides in the cell membrane. It localises to the endosome membrane. It is found in the nucleus outer membrane. It carries out the reaction N-(hexadecanoyl)-sphing-4-enine-1-phosphate(in) = N-(hexadecanoyl)-sphing-4-enine-1-phosphate(out). The enzyme catalyses N-(9Z-octadecenoyl)-sphing-4-enine-1-phosphate(in) = N-(9Z-octadecenoyl)-sphing-4-enine-1-phosphate(out). Mediates the intracellular transfer of ceramide-1-phosphate (C1P) between organelle membranes and the cell membrane. Required for normal structure of the Golgi stacks. Can bind phosphoceramides with a variety of aliphatic chains, but has a preference for lipids with saturated C16:0 or monounsaturated C18:1 aliphatic chains, and is inefficient with phosphoceramides containing lignoceryl (C24:0). Plays a role in the regulation of the cellular levels of ceramide-1-phosphate, and thereby contributes to the regulation of phospholipase PLA2G4A activity and the release of arachidonic acid. Has no activity with galactosylceramide, lactosylceramide, sphingomyelin, phosphatidylcholine, phosphatidic acid and ceramide. C1P transfer is stimulated by phosphatidylserine in C1P source vesicles. Regulates autophagy, inflammasome mediated IL1B and IL18 processing, and pyroptosis, but not apoptosis. The chain is Ceramide-1-phosphate transfer protein (CPTP) from Bos taurus (Bovine).